The following is a 174-amino-acid chain: Calcium-binding protein F (174 aa).

4 EF-hand domains span residues 9–44, 60–83, 92–127, and 133–162; these read KIFQ…KMDG, VDMD…EAKK, AALA…NGHT, and DQVL…RRID. 5 residues coordinate Ca(2+): Asp22, Asn24, Asp26, Ser28, and Asp33. Ca(2+) contacts are provided by Asp105, Asp107, Asp109, Lys111, Glu116, Asp140, Asp142, Asp144, Cys146, and Glu151.

In Dictyostelium discoideum (Social amoeba), this protein is Calcium-binding protein F (cbpF).